We begin with the raw amino-acid sequence, 383 residues long: Chorismate synthase (383 aa).

Residues arginine 40 and arginine 46 each contribute to the NADP(+) site. FMN is bound by residues 128–130, glycine 291, 306–310, and arginine 332; these read RAS and KPIPT.

The protein belongs to the chorismate synthase family. As to quaternary structure, homotetramer. The cofactor is FMNH2.

The catalysed reaction is 5-O-(1-carboxyvinyl)-3-phosphoshikimate = chorismate + phosphate. It participates in metabolic intermediate biosynthesis; chorismate biosynthesis; chorismate from D-erythrose 4-phosphate and phosphoenolpyruvate: step 7/7. Functionally, catalyzes the anti-1,4-elimination of the C-3 phosphate and the C-6 proR hydrogen from 5-enolpyruvylshikimate-3-phosphate (EPSP) to yield chorismate, which is the branch point compound that serves as the starting substrate for the three terminal pathways of aromatic amino acid biosynthesis. This reaction introduces a second double bond into the aromatic ring system. This chain is Chorismate synthase, found in Moorella thermoacetica (strain ATCC 39073 / JCM 9320).